A 341-amino-acid polypeptide reads, in one-letter code: S-adenosylmethionine:tRNA ribosyltransferase-isomerase (341 aa).

It belongs to the QueA family. Monomer.

It localises to the cytoplasm. It catalyses the reaction 7-aminomethyl-7-carbaguanosine(34) in tRNA + S-adenosyl-L-methionine = epoxyqueuosine(34) in tRNA + adenine + L-methionine + 2 H(+). It participates in tRNA modification; tRNA-queuosine biosynthesis. Functionally, transfers and isomerizes the ribose moiety from AdoMet to the 7-aminomethyl group of 7-deazaguanine (preQ1-tRNA) to give epoxyqueuosine (oQ-tRNA). The sequence is that of S-adenosylmethionine:tRNA ribosyltransferase-isomerase from Clostridium perfringens (strain SM101 / Type A).